Here is a 106-residue protein sequence, read N- to C-terminus: MKAKPSHPAFSMSTSLRVSPSIHGYHFDTASRKKAVGNIFENIDQEALQRLFRNSGDKKAEERAKIIFAIDQDLEEKTRALMALKKRTKDKLFQFLKLRKYSIKVH.

Monomer. Interacts with NOTCH2 (via ANK repeats), the interaction inhibits the nuclear translocation of NOTCH2 N2ICD. Interacts (C-terminus) with CBY1 (C-terminus), TCIM competes with CTNNB1 for the interaction with CBY1.

The protein resides in the cytoplasm. The protein localises to the nucleus. It is found in the nucleolus. It localises to the nucleus speckle. Functionally, seems to be involved in the regulation of cell growth an differentiation, may play different and opposite roles depending on the tissue or cell type. May enhance the WNT-CTNNB1 pathway by relieving antagonistic activity of CBY1. Enhances the proliferation of follicular dendritic cells. Plays a role in the mitogen-activated MAPK2/3 signaling pathway, positively regulates G1-to-S-phase transition of the cell cycle. In endothelial cells, enhances key inflammatory mediators and inflammatory response through the modulation of NF-kappaB transcriptional regulatory activity. Involved in the regulation of heat shock response, seems to play a positive feedback with HSF1 to modulate heat-shock downstream gene expression. Plays a role in the regulation of hematopoiesis even if the mechanisms are unknown. In cancers such as thyroid or lung cancer, it has been described as promoter of cell proliferation, G1-to-S-phase transition and inhibitor of apoptosis. However, it negatively regulates self-renewal of liver cancer cells via suppresion of NOTCH2 signaling. The polypeptide is Transcriptional and immune response regulator (TCIM) (Bos taurus (Bovine)).